We begin with the raw amino-acid sequence, 481 residues long: Beta-amyrin 28-monooxygenase (481 aa).

Residues 4–24 (FYVPLLSLFVLFVSLSFYFLF) form a helical membrane-spanning segment. Cys428 provides a ligand contact to heme.

It belongs to the cytochrome P450 family. It depends on heme as a cofactor.

The protein resides in the membrane. The catalysed reaction is beta-amyrin + 3 reduced [NADPH--hemoprotein reductase] + 3 O2 = oleanolate + 3 oxidized [NADPH--hemoprotein reductase] + 4 H2O + 4 H(+). Catalyzes the oxidation of the methyl group to a carboxyl group at the C-28 position of beta-amyrin to form oleanolate. This is Beta-amyrin 28-monooxygenase from Kalopanax septemlobus (Castor aralia).